Here is a 130-residue protein sequence, read N- to C-terminus: Phosphoribosyl-AMP cyclohydrolase (130 aa).

Aspartate 77 provides a ligand contact to Mg(2+). Cysteine 78 is a binding site for Zn(2+). Aspartate 79 and aspartate 81 together coordinate Mg(2+). Zn(2+) is bound by residues cysteine 95 and cysteine 102.

Belongs to the PRA-CH family. In terms of assembly, homodimer. Requires Mg(2+) as cofactor. The cofactor is Zn(2+).

The protein resides in the cytoplasm. It carries out the reaction 1-(5-phospho-beta-D-ribosyl)-5'-AMP + H2O = 1-(5-phospho-beta-D-ribosyl)-5-[(5-phospho-beta-D-ribosylamino)methylideneamino]imidazole-4-carboxamide. It participates in amino-acid biosynthesis; L-histidine biosynthesis; L-histidine from 5-phospho-alpha-D-ribose 1-diphosphate: step 3/9. Catalyzes the hydrolysis of the adenine ring of phosphoribosyl-AMP. In Pseudomonas putida (strain ATCC 700007 / DSM 6899 / JCM 31910 / BCRC 17059 / LMG 24140 / F1), this protein is Phosphoribosyl-AMP cyclohydrolase.